Reading from the N-terminus, the 103-residue chain is Co-chaperonin GroES (103 aa).

The protein belongs to the GroES chaperonin family. In terms of assembly, heptamer of 7 subunits arranged in a ring. Interacts with the chaperonin GroEL.

The protein localises to the cytoplasm. In terms of biological role, together with the chaperonin GroEL, plays an essential role in assisting protein folding. The GroEL-GroES system forms a nano-cage that allows encapsulation of the non-native substrate proteins and provides a physical environment optimized to promote and accelerate protein folding. GroES binds to the apical surface of the GroEL ring, thereby capping the opening of the GroEL channel. This chain is Co-chaperonin GroES, found in Synechococcus sp. (strain CC9605).